Reading from the N-terminus, the 84-residue chain is Sec-independent protein translocase protein TatA (84 aa).

Residues M1–G21 form a helical membrane-spanning segment. Basic and acidic residues predominate over residues E42–E57. The interval E42–A84 is disordered. A compositionally biased stretch (polar residues) spans T62–E77.

The protein belongs to the TatA/E family. In terms of assembly, the Tat system comprises two distinct complexes: a TatABC complex, containing multiple copies of TatA, TatB and TatC subunits, and a separate TatA complex, containing only TatA subunits. Substrates initially bind to the TatABC complex, which probably triggers association of the separate TatA complex to form the active translocon.

It is found in the cell membrane. In terms of biological role, part of the twin-arginine translocation (Tat) system that transports large folded proteins containing a characteristic twin-arginine motif in their signal peptide across membranes. TatA could form the protein-conducting channel of the Tat system. The polypeptide is Sec-independent protein translocase protein TatA (Corynebacterium jeikeium (strain K411)).